Here is a 239-residue protein sequence, read N- to C-terminus: MGRKWNNIKEKKASKDASTSRIYAKFGREIYVAAKQGEPNPESNQALRFVLERAKTYSVPKHIVDRAIEKAKGGAEENFDELRYEGFGPNGSMVIVDALTNNVNRTASDVRAAFGKNGGNMGVSGSVAYMFDQTAVIGVEGKSEEETLELLMEADVDVRDIMEEDETVIVYAEPDQFHQVQEAFKQAGVEEFTVAEITMLPQNEVTLDDESKEQFEKLIDVLEELEDVQQVYHNVDLGE.

This sequence belongs to the TACO1 family. YeeN subfamily.

It localises to the cytoplasm. The protein is Probable transcriptional regulatory protein BPUM_0743 of Bacillus pumilus (strain SAFR-032).